The chain runs to 1099 residues: Glutamine--fructose-6-phosphate aminotransferase [isomerizing] (1099 aa).

Catalysis depends on C2, which acts as the Nucleophile; for GATase activity. Residues 2 to 71 (CGIIGYIGND…DIDGNIGIGH (70 aa)) enclose the Glutamine amidotransferase type-2; first part domain. The HTH cro/C1-type domain maps to 198-253 (LRKVREKLGLTRKDVEKLCGVKEIYIVKIETGKLESIEEERLKKLCSLYGINFEEI). Residues 278 to 413 (IIGYIIGDGH…IQFLLLRFGI (136 aa)) form the DOD-type homing endonuclease domain. Residues 571 to 723 (SRWATHGNVC…DGDVVVIKKK (153 aa)) form the Glutamine amidotransferase type-2; second part domain. 2 SIS domains span residues 786–923 (LAKC…LLGR) and 948–1089 (TIKE…VDKP). K1094 (for Fru-6P isomerization activity) is an active-site residue.

It in the C-terminal section; belongs to the SIS family. GFAT subfamily. In terms of assembly, homodimer. This protein undergoes a protein self splicing that involves a post-translational excision of the intervening region (intein) followed by peptide ligation.

The protein resides in the cytoplasm. The enzyme catalyses D-fructose 6-phosphate + L-glutamine = D-glucosamine 6-phosphate + L-glutamate. Its function is as follows. Catalyzes the first step in hexosamine metabolism, converting fructose-6P into glucosamine-6P using glutamine as a nitrogen source. The protein is Glutamine--fructose-6-phosphate aminotransferase [isomerizing] (glmS) of Methanocaldococcus jannaschii (strain ATCC 43067 / DSM 2661 / JAL-1 / JCM 10045 / NBRC 100440) (Methanococcus jannaschii).